Here is a 25-residue protein sequence, read N- to C-terminus: Brevinin-2R (25 aa).

A disulfide bond links Cys19 and Cys25.

It belongs to the frog skin active peptide (FSAP) family. Brevinin subfamily. As to expression, expressed by the skin glands.

It localises to the secreted. Functionally, cytotoxic to cancer cells, acts via the activation of the lysosomal-mitochondrial death pathway and autophagy-like cell death. Does not show significant hemolytic activity. The polypeptide is Brevinin-2R (Pelophylax ridibundus (Marsh frog)).